A 942-amino-acid chain; its full sequence is AP-1 complex subunit beta (942 aa).

6 HEAT repeats span residues 45–82 (KDVSMLFTHVLNCMQTHNLELKKLVYLYVMNYAKNHPD), 117–154 (NITEHLCEPLRHALKDQDPYVRKTAAVCVAKLYDVNPE), 156–193 (VENQGFLNILNDLLGDSNPMVVANAVASLTEIDEVSKK), 273–313 (DVIR…KRPE), 384–421 (RASERCIQVLLDLIQTKVNYVVQEAIIVIKDIFRKYPN), and 458–495 (DNAHELLNSFLEGFKDENSQVQLQLLTSIVKLFLKRPK). A disordered region spans residues 590-700 (GLRNKEEEDE…NDLSFLGGGG (111 aa)). Over residues 596 to 609 (EEDEEEPDYVDDDN) the composition is skewed to acidic residues. 2 stretches are compositionally biased toward low complexity: residues 613–645 (QQGGQQQQGGYQQQQQQQQQGGYQQQQPQQQQP) and 664–677 (NNNNNNYGNNNNNN). Polar residues predominate over residues 678 to 693 (MYSPQPQQFNGNSNDL).

This sequence belongs to the adaptor complexes large subunit family. Adaptor protein complex 1 (AP-1) is a heterotetramer composed of two large adaptins (gamma-type subunit and beta-type subunit), a medium adaptin (mu-type subunit) and a small adaptin (sigma-type subunit).

It localises to the golgi apparatus. Its subcellular location is the trans-Golgi network. The protein resides in the cytoplasmic vesicle. It is found in the clathrin-coated vesicle membrane. In terms of biological role, subunit of clathrin-associated adaptor protein complex 1 that plays a role in protein sorting in the trans-Golgi network (TGN) and endosomes. The AP complexes mediate the recruitment of clathrin to membranes and the recognition of sorting signals within the cytosolic tails of transmembrane cargo molecules. Also involved in early steps of phagocytosis and macropinocytosis. This chain is AP-1 complex subunit beta (ap1b1), found in Dictyostelium discoideum (Social amoeba).